Here is a 263-residue protein sequence, read N- to C-terminus: NADH dehydrogenase [ubiquinone] iron-sulfur protein 3, mitochondrial (263 aa).

The N-terminal 35 residues, 1–35 (MVAAVARLWWRGLLGASALTRGAGRPSVLLLPVRR), are a transit peptide targeting the mitochondrion.

The protein belongs to the complex I 30 kDa subunit family. Core subunit of respiratory chain NADH dehydrogenase (Complex I) which is composed of 45 different subunits. Interacts with NDUFAF3. Interacts with RAB5IF. Found in subcomplexes containing subunits NDUFS2, MT-ND1 and NDUFA13.

The protein resides in the mitochondrion inner membrane. It catalyses the reaction a ubiquinone + NADH + 5 H(+)(in) = a ubiquinol + NAD(+) + 4 H(+)(out). Core subunit of the mitochondrial membrane respiratory chain NADH dehydrogenase (Complex I) which catalyzes electron transfer from NADH through the respiratory chain, using ubiquinone as an electron acceptor. Essential for the catalytic activity and assembly of complex I. The chain is NADH dehydrogenase [ubiquinone] iron-sulfur protein 3, mitochondrial (NDUFS3) from Gorilla gorilla gorilla (Western lowland gorilla).